The sequence spans 152 residues: MKLILTADVDNLGAPGDTVEVKDGYGRNYLLPRGLAIVASRGAQKQVEGIRRAQEARRVRDLDHANELKQAIEGLSAVSLSVKTAGTGKLFGSVTQSDVAAAIKAAGGPVIDKRSIELPKSHIKSTGKHTIAVHLHPDVTAKFDLQVDAAAS.

The protein belongs to the bacterial ribosomal protein bL9 family.

Its function is as follows. Binds to the 23S rRNA. The chain is Large ribosomal subunit protein bL9 from Nocardia farcinica (strain IFM 10152).